A 413-amino-acid polypeptide reads, in one-letter code: Protein LAZY 1 (413 aa).

Residues 71–91 (FTFGGSGLLTIGTLGIAAVAV) form a helical membrane-spanning segment. A compositionally biased stretch (acidic residues) spans 103-124 (DADADSDFDDNDDTAGDDEDQV). Disordered regions lie at residues 103 to 127 (DADA…VDSA) and 261 to 308 (EDGG…ASAT). Short sequence motifs (nuclear localization signal) lie at residues 275–298 (RKAG…EKVP) and 338–345 (KKSRKRGS).

This sequence belongs to the LAZY family. As to expression, expressed in the node of the stem, initiating leaf founder cells, young leaf primordia, tips of axillary meristems, spikelet pair meristems of developing tassels and ears, male flower primordia, tassels, ears, silks and seeds. Expressed in leaf sheaths, leaf pulvinus and shoot apical meristem (SAM).

Its subcellular location is the cell membrane. The protein resides in the nucleus. Involved in the regulation of shoot gravitropism, and tassel and ear development through the regulation of polar auxin transport (PAT) and auxin signaling. Acts as a negative regulator of basipetal PAT, but positive regulator of lateral auxin transport. Involved in the regulation of shoot gravitropism and leaf angle through the regulation of cell development. The chain is Protein LAZY 1 from Zea mays (Maize).